Reading from the N-terminus, the 251-residue chain is Tyrosine phosphatase-like protein J3 (251 aa).

The Tyrosine-protein phosphatase domain maps to 26–251; sequence IADEYYTIVP…PVLQNSKRRE (226 aa).

This sequence belongs to the protein-tyrosine phosphatase family.

In Microplitis demolitor (Parasitoid wasp), this protein is Tyrosine phosphatase-like protein J3 (J4).